We begin with the raw amino-acid sequence, 56 residues long: Large ribosomal subunit protein bL33 (56 aa).

This sequence belongs to the bacterial ribosomal protein bL33 family.

The protein is Large ribosomal subunit protein bL33 of Anaplasma phagocytophilum (strain HZ).